The chain runs to 391 residues: Cystathionine beta-lyase MetC (391 aa).

Residue K196 is modified to N6-(pyridoxal phosphate)lysine.

It belongs to the trans-sulfuration enzymes family. In terms of assembly, homotetramer. It depends on pyridoxal 5'-phosphate as a cofactor.

It catalyses the reaction L,L-cystathionine + H2O = L-homocysteine + pyruvate + NH4(+). The catalysed reaction is an S-substituted L-cysteine + H2O = a thiol + pyruvate + NH4(+). It functions in the pathway amino-acid biosynthesis; L-methionine biosynthesis via de novo pathway; L-homocysteine from L-cystathionine: step 1/1. With respect to regulation, cystathionine beta-lyase activity is inhibited by sweat components such as glycine, serine and ammonium sulfate. Inhibited by cystathionine at a concentration higher than 6 mM. Catalyzes the transformation of cystathionine into homocysteine. Can also catalyze, at low levels, the conversion of cystathionine into methionine and the conversion of methionine into methanethiol. The polypeptide is Cystathionine beta-lyase MetC (Staphylococcus haemolyticus (strain JCSC1435)).